Reading from the N-terminus, the 142-residue chain is Nucleoside diphosphate kinase (142 aa).

Lys11, Phe59, Arg87, Thr93, Arg104, and Asn114 together coordinate ATP. The active-site Pros-phosphohistidine intermediate is His117.

The protein belongs to the NDK family. Homotetramer. Mg(2+) serves as cofactor.

The protein localises to the cytoplasm. The catalysed reaction is a 2'-deoxyribonucleoside 5'-diphosphate + ATP = a 2'-deoxyribonucleoside 5'-triphosphate + ADP. The enzyme catalyses a ribonucleoside 5'-diphosphate + ATP = a ribonucleoside 5'-triphosphate + ADP. In terms of biological role, major role in the synthesis of nucleoside triphosphates other than ATP. The ATP gamma phosphate is transferred to the NDP beta phosphate via a ping-pong mechanism, using a phosphorylated active-site intermediate. The protein is Nucleoside diphosphate kinase of Salinibacter ruber (strain DSM 13855 / M31).